The following is a 445-amino-acid chain: Phosphoglucosamine mutase (445 aa).

Serine 99 acts as the Phosphoserine intermediate in catalysis. 4 residues coordinate Mg(2+): serine 99, aspartate 242, aspartate 244, and aspartate 246. Residue serine 99 is modified to Phosphoserine.

It belongs to the phosphohexose mutase family. Requires Mg(2+) as cofactor. In terms of processing, activated by phosphorylation.

It carries out the reaction alpha-D-glucosamine 1-phosphate = D-glucosamine 6-phosphate. In terms of biological role, catalyzes the conversion of glucosamine-6-phosphate to glucosamine-1-phosphate. The sequence is that of Phosphoglucosamine mutase from Helicobacter pylori (strain G27).